The following is a 354-amino-acid chain: Uroporphyrinogen decarboxylase (354 aa).

Substrate contacts are provided by residues 27-31, Asp-77, Tyr-154, Thr-209, and His-327; that span reads RQAGR.

It belongs to the uroporphyrinogen decarboxylase family. Homodimer.

The protein resides in the cytoplasm. It catalyses the reaction uroporphyrinogen III + 4 H(+) = coproporphyrinogen III + 4 CO2. It participates in porphyrin-containing compound metabolism; protoporphyrin-IX biosynthesis; coproporphyrinogen-III from 5-aminolevulinate: step 4/4. In terms of biological role, catalyzes the decarboxylation of four acetate groups of uroporphyrinogen-III to yield coproporphyrinogen-III. This chain is Uroporphyrinogen decarboxylase, found in Salmonella schwarzengrund (strain CVM19633).